The chain runs to 156 residues: Cyanate hydratase (156 aa).

Active-site residues include R96, E99, and S122.

Belongs to the cyanase family.

It carries out the reaction cyanate + hydrogencarbonate + 3 H(+) = NH4(+) + 2 CO2. Functionally, catalyzes the reaction of cyanate with bicarbonate to produce ammonia and carbon dioxide. The polypeptide is Cyanate hydratase (Pseudomonas putida (strain W619)).